The chain runs to 141 residues: Hemoglobin subunit alpha-D (141 aa).

Positions Val-1–Arg-141 constitute a Globin domain. 2 residues coordinate heme b: His-57 and His-87.

The protein belongs to the globin family. As to quaternary structure, the deoxy-Hb is a heterotetramer of two alpha and two beta chains, but oxygenation results in dissociation to dimers. Red blood cells.

In terms of biological role, involved in oxygen transport from the lung to the various peripheral tissues. This chain is Hemoglobin subunit alpha-D (HBAD), found in Erythrolamprus miliaris (South American water snake).